The primary structure comprises 490 residues: 3-octaprenyl-4-hydroxybenzoate carboxy-lyase (490 aa).

Mn(2+) is bound at residue N172. Residues 175–177, 189–191, and 194–195 contribute to the prenylated FMN site; these read IYR, RWL, and RG. Residue E238 participates in Mn(2+) binding. The active-site Proton donor is the D287.

Belongs to the UbiD family. Homohexamer. The cofactor is prenylated FMN. Mn(2+) is required as a cofactor.

Its subcellular location is the cell membrane. The enzyme catalyses a 4-hydroxy-3-(all-trans-polyprenyl)benzoate + H(+) = a 2-(all-trans-polyprenyl)phenol + CO2. The protein operates within cofactor biosynthesis; ubiquinone biosynthesis. Functionally, catalyzes the decarboxylation of 3-octaprenyl-4-hydroxy benzoate to 2-octaprenylphenol, an intermediate step in ubiquinone biosynthesis. The chain is 3-octaprenyl-4-hydroxybenzoate carboxy-lyase from Saccharophagus degradans (strain 2-40 / ATCC 43961 / DSM 17024).